The sequence spans 362 residues: MAQIFNFSSGPAMLPAEVLKQAQQELRDWNGLGTSVMEVSHRGKEFIQVAEEAEKDFRDLLNVPSNYKVLFCHGGGRGQFAAVPLNILGDKTTADYVDAGYWAASAIKEAKKYCTPNVFDAKVTVDGLRAVKPMREWQLSDNAAYMHYCPNETIDGIAIDETPDFGKDVVVAADFSSTILSRPIDVSRYGVIYAGAQKNIGPAGLTIVIVREDLLGKANIACPSILDYSILNDNDSMFNTPPTFAWYLSGLVFKWLKANGGVAAMDKINQQKAELLYGVIDNSDFYRNDVAKANRSRMNVPFQLADSALDKLFLEESFAAGLHALKGHRVVGGMRASIYNAMPLEGVKALTDFMVEFERRHG.

S9 and R42 together coordinate L-glutamate. Pyridoxal 5'-phosphate contacts are provided by residues 76-77 (GR), W102, T153, D174, and Q197. K198 is modified (N6-(pyridoxal phosphate)lysine). 239-240 (NT) lines the pyridoxal 5'-phosphate pocket.

It belongs to the class-V pyridoxal-phosphate-dependent aminotransferase family. SerC subfamily. As to quaternary structure, homodimer. The cofactor is pyridoxal 5'-phosphate.

It localises to the cytoplasm. The catalysed reaction is O-phospho-L-serine + 2-oxoglutarate = 3-phosphooxypyruvate + L-glutamate. It carries out the reaction 4-(phosphooxy)-L-threonine + 2-oxoglutarate = (R)-3-hydroxy-2-oxo-4-phosphooxybutanoate + L-glutamate. It participates in amino-acid biosynthesis; L-serine biosynthesis; L-serine from 3-phospho-D-glycerate: step 2/3. It functions in the pathway cofactor biosynthesis; pyridoxine 5'-phosphate biosynthesis; pyridoxine 5'-phosphate from D-erythrose 4-phosphate: step 3/5. Its function is as follows. Catalyzes the reversible conversion of 3-phosphohydroxypyruvate to phosphoserine and of 3-hydroxy-2-oxo-4-phosphonooxybutanoate to phosphohydroxythreonine. This Escherichia coli O7:K1 (strain IAI39 / ExPEC) protein is Phosphoserine aminotransferase.